The following is a 361-amino-acid chain: DNA replication and repair protein RecF (361 aa).

Glycine 30–threonine 37 serves as a coordination point for ATP.

Belongs to the RecF family.

Its subcellular location is the cytoplasm. Its function is as follows. The RecF protein is involved in DNA metabolism; it is required for DNA replication and normal SOS inducibility. RecF binds preferentially to single-stranded, linear DNA. It also seems to bind ATP. The polypeptide is DNA replication and repair protein RecF (Streptococcus gordonii (strain Challis / ATCC 35105 / BCRC 15272 / CH1 / DL1 / V288)).